We begin with the raw amino-acid sequence, 343 residues long: Methionine import ATP-binding protein MetN 3 (343 aa).

Residues 2–241 (IELSNITKVF…PKTPLAQKFI (240 aa)) form the ABC transporter domain. An ATP-binding site is contributed by 38 to 45 (GASGAGKS).

The protein belongs to the ABC transporter superfamily. Methionine importer (TC 3.A.1.24) family. The complex is composed of two ATP-binding proteins (MetN), two transmembrane proteins (MetI) and a solute-binding protein (MetQ).

It localises to the cell inner membrane. The catalysed reaction is L-methionine(out) + ATP + H2O = L-methionine(in) + ADP + phosphate + H(+). It catalyses the reaction D-methionine(out) + ATP + H2O = D-methionine(in) + ADP + phosphate + H(+). Part of the ABC transporter complex MetNIQ involved in methionine import. Responsible for energy coupling to the transport system. The sequence is that of Methionine import ATP-binding protein MetN 3 from Pectobacterium atrosepticum (strain SCRI 1043 / ATCC BAA-672) (Erwinia carotovora subsp. atroseptica).